The chain runs to 173 residues: Lipid A deacylase PagL (173 aa).

Residues Met-1–Ala-23 form the signal peptide. Over Asp-25 to Ala-28 the chain is Periplasmic. The beta stranded transmembrane segment at Ala-29–Ala-32 threads the bilayer. A topological domain (periplasmic) is located at residue Thr-33. A beta stranded membrane pass occupies residues Gly-34–Asp-49. The Extracellular portion of the chain corresponds to Lys-50–Ser-56. Residues Thr-57 to Trp-71 form a beta stranded membrane-spanning segment. The Periplasmic portion of the chain corresponds to Glu-72–Gly-73. The beta stranded transmembrane segment at Gly-74–Phe-89 threads the bilayer. A topological domain (extracellular) is located at residue Val-90. A beta stranded membrane pass occupies residues Tyr-91–Phe-93. Residues Ala-94–Gly-95 are Periplasmic-facing. A beta stranded membrane pass occupies residues Asp-96–Ile-98. Residues Lys-99–Pro-100 lie on the Extracellular side of the membrane. A beta stranded transmembrane segment spans residues Phe-101–Arg-115. At Val-116–Gly-117 the chain is on the periplasmic side. Residues Asp-118–Glu-128 traverse the membrane as a beta stranded segment. Residues Asp-129–Ala-138 lie on the Extracellular side of the membrane. Residues Asn-139–Ile-148 form a beta stranded membrane-spanning segment. Active-site charge relay system residues include His-149, Ser-151, and Glu-163. Topologically, residues His-149–Ile-173 are periplasmic.

It belongs to the PagL family. In terms of assembly, homodimer.

Its subcellular location is the cell outer membrane. It carries out the reaction a 3-(acyloxy)acyl derivative of bacterial toxin + H2O = a 3-hydroxyacyl derivative of bacterial toxin + a fatty acid + H(+). Its activity is regulated as follows. Decreased activity at low temperatures (15 or 21 degrees Celsius). Its function is as follows. Has lipid A 3-O-deacylase activity. Hydrolyzes the ester bond at the 3 position of lipid A, a bioactive component of lipopolysaccharide (LPS), thereby releasing the primary fatty acyl moiety. Lacks fatty acyl chain-length specificity as removes both 3-OH C10 and 3-OH C14 fatty acids from lipid A. The protein is Lipid A deacylase PagL of Pseudomonas aeruginosa (strain ATCC 15692 / DSM 22644 / CIP 104116 / JCM 14847 / LMG 12228 / 1C / PRS 101 / PAO1).